Reading from the N-terminus, the 364-residue chain is Chorismate synthase (364 aa).

The NADP(+) site is built by Arg-48 and Arg-54. Residues 125–127 (RSS), 238–239 (NA), Gly-278, 293–297 (KPTSS), and Arg-319 contribute to the FMN site.

Belongs to the chorismate synthase family. Homotetramer. FMNH2 is required as a cofactor.

It carries out the reaction 5-O-(1-carboxyvinyl)-3-phosphoshikimate = chorismate + phosphate. It functions in the pathway metabolic intermediate biosynthesis; chorismate biosynthesis; chorismate from D-erythrose 4-phosphate and phosphoenolpyruvate: step 7/7. In terms of biological role, catalyzes the anti-1,4-elimination of the C-3 phosphate and the C-6 proR hydrogen from 5-enolpyruvylshikimate-3-phosphate (EPSP) to yield chorismate, which is the branch point compound that serves as the starting substrate for the three terminal pathways of aromatic amino acid biosynthesis. This reaction introduces a second double bond into the aromatic ring system. The protein is Chorismate synthase of Shewanella woodyi (strain ATCC 51908 / MS32).